We begin with the raw amino-acid sequence, 543 residues long: Chaperonin GroEL (543 aa).

ATP is bound by residues 29–32, 86–90, G413, 476–478, and D492; these read TLGP, DGTTT, and NAA.

It belongs to the chaperonin (HSP60) family. Forms a cylinder of 14 subunits composed of two heptameric rings stacked back-to-back. Interacts with the co-chaperonin GroES.

The protein resides in the cytoplasm. It carries out the reaction ATP + H2O + a folded polypeptide = ADP + phosphate + an unfolded polypeptide.. Functionally, together with its co-chaperonin GroES, plays an essential role in assisting protein folding. The GroEL-GroES system forms a nano-cage that allows encapsulation of the non-native substrate proteins and provides a physical environment optimized to promote and accelerate protein folding. This Streptococcus pyogenes serotype M5 (strain Manfredo) protein is Chaperonin GroEL.